The primary structure comprises 500 residues: MTQAILALSQIEKAFPGVKALDKASLNVYPGRVMALMGENGAGKSTLMKVLTGIYSKDAGSIEYQGQPVSFKGPRDSQLAGISIIHQELNLIPQLTIAENIFLGREMTSPFGRILWDEMHRKADQLLARLNVKHSAKTLLGELSLGEQQMVEIAKALSFESKVIIMDEPTDALTDTETESLFNVINELREQGCGIVYISHRLKEIFEICDDITVLRDGKFIGECRVCDTNEDGLIEMMVGRKLEEQYPRIAAQQGDISLEVIGLTGSGVHDVSFTLKKGEILGVSGLMGAGRTELMKVIYGALPSERGVINLNGRTVNPVSPQDGLANGIAYISEDRKGDGLVLGLSVKENMSLCALDQLSKGVQIRHADEVIAVDDFIRLFNIKTPSREQIIGNLSGGNQQKVAIAKGLMTKPKVLILDEPTRGVDVGAKKEIYQLINQFKAEGMSIILVSSEMPEVLGMSDRILVMHEGRISGEFMASEADQEKLMACAVGRNPAHAA.

ABC transporter domains lie at 6 to 242 (LALS…VGRK) and 252 to 495 (AQQG…VGRN). Residue 38–45 (GENGAGKS) participates in ATP binding.

This sequence belongs to the ABC transporter superfamily. Ribose importer (TC 3.A.1.2.1) family. The complex is composed of an ATP-binding protein (RbsA), two transmembrane proteins (RbsC) and a solute-binding protein (RbsB).

It is found in the cell inner membrane. The enzyme catalyses D-ribose(out) + ATP + H2O = D-ribose(in) + ADP + phosphate + H(+). Its function is as follows. Part of the ABC transporter complex RbsABC involved in ribose import. Responsible for energy coupling to the transport system. The protein is Ribose import ATP-binding protein RbsA of Vibrio cholerae serotype O1 (strain ATCC 39315 / El Tor Inaba N16961).